The sequence spans 94 residues: DNA-directed RNA polymerase subunit omega (94 aa).

The protein belongs to the RNA polymerase subunit omega family. Consists of a sigma factor and the RNAP core enzyme which is composed of 2 alpha chains, 1 beta chain, 1 beta' chain and 1 subunit omega.

It carries out the reaction RNA(n) + a ribonucleoside 5'-triphosphate = RNA(n+1) + diphosphate. Functionally, promotes RNA polymerase assembly. Latches the N- and C-terminal regions of the beta' subunit thereby facilitating its interaction with the beta and alpha subunits. The protein is DNA-directed RNA polymerase subunit omega of Shewanella violacea (strain JCM 10179 / CIP 106290 / LMG 19151 / DSS12).